Reading from the N-terminus, the 604-residue chain is UvrABC system protein C (604 aa).

One can recognise a GIY-YIG domain in the interval 15-92; sequence DLPGCYLMKN…IQKHQPYFNI (78 aa). The region spanning 197–232 is the UVR domain; sequence ETVKKQLTKRMDQAAADLEFERAAELRDQLNYIEMT.

This sequence belongs to the UvrC family. In terms of assembly, interacts with UvrB in an incision complex.

Its subcellular location is the cytoplasm. Functionally, the UvrABC repair system catalyzes the recognition and processing of DNA lesions. UvrC both incises the 5' and 3' sides of the lesion. The N-terminal half is responsible for the 3' incision and the C-terminal half is responsible for the 5' incision. This chain is UvrABC system protein C, found in Lactiplantibacillus plantarum (strain ATCC BAA-793 / NCIMB 8826 / WCFS1) (Lactobacillus plantarum).